The primary structure comprises 466 residues: Pentatricopeptide repeat-containing protein At4g01400, mitochondrial (466 aa).

The transit peptide at 1–34 directs the protein to the mitochondrion; it reads MIRRPIYDFAAVFRHLTSPLSTSSRFLFYSSSEH. PPR repeat units follow at residues 118 to 152, 153 to 188, 189 to 223, 224 to 258, 259 to 293, 294 to 328, 329 to 363, and 364 to 398; these read TGEI…NFTP, QPKH…GVMP, NTRS…DVVP, DVDS…GFVP, DRLS…GCNP, DLVH…GCSP, NSVS…GFSP, and HFSV…GETL.

It belongs to the PPR family. P subfamily.

It localises to the mitochondrion. This is Pentatricopeptide repeat-containing protein At4g01400, mitochondrial from Arabidopsis thaliana (Mouse-ear cress).